The following is a 451-amino-acid chain: Phenylalanine--tRNA ligase, mitochondrial (451 aa).

Residues 157–160 (SAHQ), Arg179, 186–188 (QHY), and 193–195 (QLE) each bind substrate. The residue at position 202 (Lys202) is an N6-acetyllysine. Substrate-binding residues include Glu287 and Phe312. Residues 358 to 450 (SKYPAVINDI…AVQLLGVEGR (93 aa)) enclose the FDX-ACB domain.

Belongs to the class-II aminoacyl-tRNA synthetase family. Monomer.

Its subcellular location is the mitochondrion matrix. It is found in the mitochondrion. The catalysed reaction is tRNA(Phe) + L-phenylalanine + ATP = L-phenylalanyl-tRNA(Phe) + AMP + diphosphate + H(+). In terms of biological role, is responsible for the charging of tRNA(Phe) with phenylalanine in mitochondrial translation. To a lesser extent, also catalyzes direct attachment of m-Tyr (an oxidized version of Phe) to tRNA(Phe), thereby opening the way for delivery of the misacylated tRNA to the ribosome and incorporation of ROS-damaged amino acid into proteins. The protein is Phenylalanine--tRNA ligase, mitochondrial (FARS2) of Homo sapiens (Human).